The following is a 359-amino-acid chain: DNA polymerase IV (359 aa).

Positions 4–185 (IIHVDMDCFF…LALIKIPGVG (182 aa)) constitute a UmuC domain. The Mg(2+) site is built by Asp8 and Asp103. Glu104 is an active-site residue.

This sequence belongs to the DNA polymerase type-Y family. In terms of assembly, monomer. It depends on Mg(2+) as a cofactor.

It is found in the cytoplasm. The enzyme catalyses DNA(n) + a 2'-deoxyribonucleoside 5'-triphosphate = DNA(n+1) + diphosphate. Functionally, poorly processive, error-prone DNA polymerase involved in untargeted mutagenesis. Copies undamaged DNA at stalled replication forks, which arise in vivo from mismatched or misaligned primer ends. These misaligned primers can be extended by PolIV. Exhibits no 3'-5' exonuclease (proofreading) activity. May be involved in translesional synthesis, in conjunction with the beta clamp from PolIII. This Shewanella loihica (strain ATCC BAA-1088 / PV-4) protein is DNA polymerase IV.